Consider the following 165-residue polypeptide: Chorismate pyruvate-lyase (165 aa).

Residues M35, R77, L115, and E156 each contribute to the substrate site.

It belongs to the UbiC family. In terms of assembly, monomer.

Its subcellular location is the cytoplasm. The enzyme catalyses chorismate = 4-hydroxybenzoate + pyruvate. It participates in cofactor biosynthesis; ubiquinone biosynthesis. Its function is as follows. Removes the pyruvyl group from chorismate, with concomitant aromatization of the ring, to provide 4-hydroxybenzoate (4HB) for the ubiquinone pathway. This chain is Chorismate pyruvate-lyase, found in Salmonella schwarzengrund (strain CVM19633).